The primary structure comprises 918 residues: Rap guanine nucleotide exchange factor 3 (918 aa).

S79 is subject to Phosphoserine. The DEP domain occupies 110–186 (ATYPTLIRDR…RDAQFYRFPG (77 aa)). Residues 218 to 242 (TVALRKPPGQRTDEELDLIFEELLH) form an interaction with PDE3B region. 3',5'-cyclic AMP is bound by residues 311 to 314 (GQLA) and 321 to 322 (RA). The disordered stretch occupies residues 369 to 388 (TSQGAGPSRPPTPGRNRYTV). One can recognise an N-terminal Ras-GEF domain in the interval 384–521 (NRYTVMSGTP…EQYPERRRHH (138 aa)). The interval 398 to 422 (ELLLEAMRPDSSAHDPTETFLSDFL) is interaction with PDE3B. S531 and S859 each carry phosphoserine. The Ras-GEF domain maps to 665-884 (SAKDLAGQLT…SRISTCSEQS (220 aa)).

Interacts with PDE3B and PIK3R6; form a signaling complex that regulates phosphatidylinositol 3-kinase gamma in angiogenesis.

The protein resides in the cytoplasm. It is found in the membrane. Functionally, guanine nucleotide exchange factor (GEF) for RAP1A and RAP2A small GTPases that is activated by binding cAMP. Through simultaneous binding of PDE3B to RAPGEF3 and PIK3R6 is assembled in a signaling complex in which it activates the PI3K gamma complex and which is involved in angiogenesis. Plays a role in the modulation of the cAMP-induced dynamic control of endothelial barrier function through a pathway that is independent on Rho-mediated signaling. Required for the actin rearrangement at cell-cell junctions, such as stress fibers and junctional actin. The protein is Rap guanine nucleotide exchange factor 3 (Rapgef3) of Mus musculus (Mouse).